A 313-amino-acid chain; its full sequence is Protein FixB (313 aa).

Position 255 to 283 (255 to 283 (LYLAVGISGQIQHMVGANASQTIFAINKD)) interacts with FAD.

This sequence belongs to the ETF alpha-subunit/FixB family. As to quaternary structure, heterodimer of FixA and FixB.

The protein operates within amine and polyamine metabolism; carnitine metabolism. In terms of biological role, required for anaerobic carnitine reduction. May bring reductant to CaiA. This is Protein FixB from Escherichia coli O157:H7.